Reading from the N-terminus, the 100-residue chain is Large ribosomal subunit protein bL21 (100 aa).

This sequence belongs to the bacterial ribosomal protein bL21 family. In terms of assembly, part of the 50S ribosomal subunit. Contacts protein L20.

This protein binds to 23S rRNA in the presence of protein L20. In Wolbachia sp. subsp. Drosophila simulans (strain wRi), this protein is Large ribosomal subunit protein bL21.